Reading from the N-terminus, the 262-residue chain is Triosephosphate isomerase (262 aa).

Residue 9 to 11 (NWK) coordinates substrate. The Electrophile role is filled by histidine 99. The Proton acceptor role is filled by glutamate 171. Glycine 177 and serine 216 together coordinate substrate.

This sequence belongs to the triosephosphate isomerase family. Homodimer.

It localises to the cytoplasm. The enzyme catalyses D-glyceraldehyde 3-phosphate = dihydroxyacetone phosphate. It participates in carbohydrate biosynthesis; gluconeogenesis. It functions in the pathway carbohydrate degradation; glycolysis; D-glyceraldehyde 3-phosphate from glycerone phosphate: step 1/1. In terms of biological role, involved in the gluconeogenesis. Catalyzes stereospecifically the conversion of dihydroxyacetone phosphate (DHAP) to D-glyceraldehyde-3-phosphate (G3P). The polypeptide is Triosephosphate isomerase (Blochmanniella floridana).